A 250-amino-acid chain; its full sequence is UPF0758 protein tlr1707 (250 aa).

The 124-residue stretch at 116-239 folds into the MPN domain; it reads TIIDSPALAA…YQSLREITPL (124 aa). His188, His190, and Asp201 together coordinate Zn(2+). The JAMM motif signature appears at 188-201; the sequence is HNHPSGNLSPSQAD.

This sequence belongs to the UPF0758 family.

This chain is UPF0758 protein tlr1707, found in Thermosynechococcus vestitus (strain NIES-2133 / IAM M-273 / BP-1).